Consider the following 154-residue polypeptide: UPF0178 protein SPO3827 (154 aa).

The protein belongs to the UPF0178 family.

The sequence is that of UPF0178 protein SPO3827 from Ruegeria pomeroyi (strain ATCC 700808 / DSM 15171 / DSS-3) (Silicibacter pomeroyi).